A 295-amino-acid polypeptide reads, in one-letter code: MSASESEIQARLLAQALPYMQRYENKTIVVKYGGHAMGNAELGRAFASDVALLKQSGVNPIVVHGGGPQIGAMLNKMGIESKFEGGLRVTDEKTVEIVEMVLAGSINKEIVALINQTGEWAIGLCGKDGNMVFAEKAKKTIRDPDSNIERVLDLGFVGDVVEVDRTLLDLLARSEMIPVIAPVAPGRDGHTYNINADTFAGAIAGALNATRLLFLTDVPGVLNKKGELIKQLSVAEARALIADGTISGGMIPKVETCIEAIGAGVQGVVILNGKTAHAVLLEIFTEHGAGTLIVP.

Substrate is bound by residues 66 to 67 (GG), Arg88, and Asn193.

This sequence belongs to the acetylglutamate kinase family. ArgB subfamily.

It is found in the cytoplasm. The enzyme catalyses N-acetyl-L-glutamate + ATP = N-acetyl-L-glutamyl 5-phosphate + ADP. It participates in amino-acid biosynthesis; L-arginine biosynthesis; N(2)-acetyl-L-ornithine from L-glutamate: step 2/4. Its function is as follows. Catalyzes the ATP-dependent phosphorylation of N-acetyl-L-glutamate. This chain is Acetylglutamate kinase, found in Sinorhizobium medicae (strain WSM419) (Ensifer medicae).